The primary structure comprises 335 residues: tRNA N6-adenosine threonylcarbamoyltransferase (335 aa).

Fe cation contacts are provided by His111 and His115. Substrate contacts are provided by residues 133-137, Asp166, Gly179, Asp183, and Asn268; that span reads IISGG. Asp296 lines the Fe cation pocket.

This sequence belongs to the KAE1 / TsaD family. Fe(2+) is required as a cofactor.

The protein resides in the cytoplasm. It catalyses the reaction L-threonylcarbamoyladenylate + adenosine(37) in tRNA = N(6)-L-threonylcarbamoyladenosine(37) in tRNA + AMP + H(+). In terms of biological role, required for the formation of a threonylcarbamoyl group on adenosine at position 37 (t(6)A37) in tRNAs that read codons beginning with adenine. Is involved in the transfer of the threonylcarbamoyl moiety of threonylcarbamoyl-AMP (TC-AMP) to the N6 group of A37, together with TsaE and TsaB. TsaD likely plays a direct catalytic role in this reaction. The protein is tRNA N6-adenosine threonylcarbamoyltransferase of Aquifex aeolicus (strain VF5).